Here is a 732-residue protein sequence, read N- to C-terminus: Bromodomain-containing factor 1 (732 aa).

Residues 1–22 (MSETFPETNTPVQTPSTESFVN) show a composition bias toward polar residues. 5 disordered regions span residues 1 to 207 (MSET…NLPE), 324 to 380 (TNVA…ETKP), 491 to 517 (NKPVPEPTPQNSDVSDREYSSEEEDNV), 556 to 600 (REQQ…TPPQ), and 700 to 732 (VNGQQGSDNGFMKVVNQEESSEDEASSESSEEE). The segment covering 37 to 51 (SQDSDSNQQSSHQEP) has biased composition (low complexity). A compositionally biased stretch (polar residues) spans 89–100 (ASQTGVIQTEVS). Positions 137–147 (EAPEENPQEEV) are enriched in acidic residues. Positions 206 to 315 (PENPIPQHQA…AQFEKLMVKV (110 aa)) constitute a Bromo 1 domain. The segment covering 327–338 (AEATSVATSPTT) has biased composition (polar residues). A compositionally biased stretch (basic and acidic residues) spans 370-380 (KSKELPYETKP). Positions 383-492 (KKVAAELRFC…AVFDKKWANK (110 aa)) constitute a Bromo 2 domain. Positions 529–569 (AIQVMENQIIRMRKELDELKKEHLKKLREQQAARKKKKQQK) form a coiled coil. Positions 561 to 579 (ARKKKKQQKGKRRAPKAKH) are enriched in basic residues. Residues 590–600 (PPEPPKLTPPQ) are compositionally biased toward pro residues. The NET domain occupies 593–672 (PPKLTPPQPV…GDKALKNSAG (80 aa)). Positions 718–732 (ESSEDEASSESSEEE) are enriched in acidic residues.

This sequence belongs to the BET family.

The protein resides in the nucleus. Functionally, transcription factor involved in the expression of a broad class of genes including snRNAs. Required for sporulation and DNA-damage repair. Prevents the spreading of SIR silencing at telomeres and protects histone H4, but not H3, from deacetylation. This Candida albicans (strain SC5314 / ATCC MYA-2876) (Yeast) protein is Bromodomain-containing factor 1 (BDF1).